We begin with the raw amino-acid sequence, 286 residues long: METTKKLSVLLCLFFTMNQAISESDSDEHMATFCNDSSGNFTRNTTYNTNLNTLLSTLSNQSSFANYYNLTTGLGSDTVHGMFLCIGDVNRTTCNACVKNATIEIAKNCTNHREAIIYYFSCMVRYSDKFFLSTLETKPNTYWSSDDPIPKSYDKFGQRLSDKMGEVIIRSSLLSSSFTPYYLMDTTTFDNLYDLESVVQCSPHLDPKNCTTCLKLALQELTQCCGDQLWAFIFTPKCLVSFDTSNSSSLPPLPPPSRSGSFSIRGNNKILVGMILAVSVFAFLGL.

The N-terminal stretch at 1–20 (METTKKLSVLLCLFFTMNQA) is a signal peptide. Residues 21-265 (ISESDSDEHM…PSRSGSFSIR (245 aa)) lie on the Extracellular side of the membrane. 2 consecutive Gnk2-homologous domains span residues 29–131 (HMAT…DKFF) and 137–247 (TKPN…TSNS). 10 N-linked (GlcNAc...) asparagine glycosylation sites follow: N35, N40, N44, N60, N69, N90, N100, N108, N209, and N246. The helical transmembrane segment at 266 to 284 (GNNKILVGMILAVSVFAFL) threads the bilayer. Residues 285–286 (GL) are Cytoplasmic-facing.

The protein belongs to the cysteine-rich repeat secretory protein family.

It is found in the membrane. The chain is Cysteine-rich repeat secretory protein 57 (CRRSP57) from Arabidopsis thaliana (Mouse-ear cress).